A 577-amino-acid polypeptide reads, in one-letter code: Jasmonoyl--L-amino acid synthetase JAR4 (577 aa).

S99 serves as a coordination point for ATP. S102 provides a ligand contact to jasmonate. ATP contacts are provided by residues M119, T122, G163, N168, and 331–336; that span reads GSSEGW. Position 166–170 (166–170) interacts with an L-alpha-amino acid; it reads TTNVY. 328–331 is a binding site for jasmonate; that stretch reads ADYG. An an L-alpha-amino acid-binding site is contributed by 531-535; the sequence is KILDH.

It belongs to the IAA-amido conjugating enzyme family.

The catalysed reaction is a jasmonate + an L-alpha-amino acid + ATP = a jasmonyl-L-amino acid + AMP + diphosphate + H(+). Catalyzes the synthesis of jasmonate-amino acid conjugates by adenylation. Catalyzes the conjugation of jasmonate (JA) to Ile, Leu and Val. Catalyzes the conjugation of jasmonate (JA) to Ile to mediate defense signaling and resistance to the herbivore Manduca sexta caterpillars. The protein is Jasmonoyl--L-amino acid synthetase JAR4 of Nicotiana attenuata (Coyote tobacco).